We begin with the raw amino-acid sequence, 791 residues long: MKTPKFITYVTRGFKGLESKSVENNKDHIVENSSPIASKFHEFDEQKKSFEIINYAGHEKFVDDITERESSVPGNAVYDITVRDIDAIVPVTDDVDIPASTFRMWILAFGLATVIAGVDAFFLMRYPSVSIAAIVALLVAYPLGQLWYYIIPQWEIKLPRGIRVSLNPGRFNRKEHACLYIFVNICVSAKLVNTLIIEQIKFFGVNIGIGRAILFNLCSYLSSFGWSGLALPILVYPPTLIWPSVLSSCALFKIFHDNDNTKACNWTISRLRYFFIVFVASFIWYWFPDLIFPALSSLGAWISWCKPSSAVLSQIFGVKTGLGLFPLTLDWAQISSLSNPLITPWWATCCIFTSFVFWIWIVLPGLYYQNYWQVAHFPIMTNSIYTVSGKSYDAQKVVDSKWELVTQKYQEYSPVMLPIAFIINIALSLGAFSSMMISFFLRFPTDVIQPICHVFKYSDIHTKLLKKYKRVHWGFYLASIIVSLGLGFAFTEGWHDIQIRSYGFVVSMVIGAALYIPLSLIESRSSFTISMQAFFEIVAAFWFNGQPMALLYFYSFGFGTLQHAMHMTQSAKIGHYMKVPPRLVAALLFTSGIWSSLVNSAVTGWIMYHVRDVCTSNAENNMTCRSPKTQFNSHLIWGLVGNHIFSSDGRYSFVMWFFLVGAVVSVVVYLLQISFPKSSWKHVNPALLLGGAAQIPSVTGINYSTWAAVAFCFNYLIRRGYYSWWKKYNLITAAAMDCGVAIAGLFIYFCVVYTGGSSNFSWWGTTVSSAGCDKKGCAHLSVSDISKPSGW.

Transmembrane regions (helical) follow at residues 104 to 124, 131 to 151, 177 to 197, and 226 to 246; these read MWIL…FFLM, IAAI…YYII, ACLY…TLII, and WSGL…PSVL. Asn-265 is a glycosylation site (N-linked (GlcNAc...) asparagine). A run of 8 helical transmembrane segments spans residues 274–294, 309–329, 346–366, 421–441, 471–491, 501–521, 533–553, and 583–603; these read FFIV…IFPA, SAVL…PLTL, WATC…LPGL, FIIN…SFFL, VHWG…FAFT, SYGF…LSLI, AFFE…LLYF, and LVAA…SAVT. An N-linked (GlcNAc...) asparagine glycan is attached at Asn-621. A run of 3 helical transmembrane segments spans residues 653–673, 697–717, and 733–753; these read FVMW…LLQI, SVTG…NYLI, and AAAM…CVVY. A glycan (N-linked (GlcNAc...) asparagine) is linked at Asn-759.

Belongs to the oligopeptide OPT transporter family.

Its subcellular location is the membrane. This is an uncharacterized protein from Schizosaccharomyces pombe (strain 972 / ATCC 24843) (Fission yeast).